A 140-amino-acid polypeptide reads, in one-letter code: Large-conductance mechanosensitive channel (140 aa).

Helical transmembrane passes span 16–36 (VIDL…VTAL) and 84–104 (INTV…VKLI).

The protein belongs to the MscL family. Homopentamer.

It localises to the cell inner membrane. In terms of biological role, channel that opens in response to stretch forces in the membrane lipid bilayer. May participate in the regulation of osmotic pressure changes within the cell. This chain is Large-conductance mechanosensitive channel, found in Xanthomonas oryzae pv. oryzae (strain MAFF 311018).